The primary structure comprises 124 residues: UPF0102 protein Meso_4010 (124 aa).

The protein belongs to the UPF0102 family.

This chain is UPF0102 protein Meso_4010, found in Chelativorans sp. (strain BNC1).